Reading from the N-terminus, the 647-residue chain is MTVGRPEGAPGGAEGSRQIFPPESFADTEAGEELSGDGLVLPRASKLDEFLSPEEEIDSTSDSTGSIYQNLQELKQKGRWCLLESLFQSDPESDENLSEDEEDLESFFQDKDRGMVQVQCPQALRCGSTRRCSSLNNLPSNIPRPQTQPPSGSRPPSQHRSVSSWASSITVPRPFRMTLREARKKAEWLGSPASFEQERQRAQRQGEEEAECHRQFRAQPVPAHVYLPLYQEIMERSEARRQAGIQKRKELLLSSLKPFSFLEKEEQLKEAARQRDLAATAEAKISKQKATRRIPKSILEPALGDKLQEAELFRKIRIQMRALDMLQMASSPIASSSNRANPQPRTATRTQQEKLGFLHTNFRFQPRVNPVVPDYEGLYKAFQRRAAKRRETQEATRNKPFLLRTANLRHPQRPCDAATTGRRQDSPQPPATPLPRSRSLSGLASLSANTLPVHITDATRKRESAVRSALEKKNKADESIQWLEIHKKKSQAMSKSVTLRAKAMDPHKSLEEVFKAKLKENRNNDRKRAKEYKKELEEMKQRIQTRPYLFEQVAKDLAKKEAEQWYLDTLKQAGLEEDFVRNKGQGTRAVQEKETKIKDFPRFQETTKLSIRDPEQGLEGSLEQPASPRKVLEELSHQSPENLVSLA.

Disordered stretches follow at residues methionine 1 to leucine 39, serine 89 to aspartate 110, and leucine 135 to serine 167. Acidic residues predominate over residues proline 91–glutamate 105. Positions leucine 262 to arginine 292 form a coiled coil. Polar residues predominate over residues proline 332 to threonine 350. Disordered stretches follow at residues proline 332–glutamine 352 and lysine 388–serine 439. Residues leucine 510–arginine 546 are a coiled coil. The segment at lysine 583 to alanine 647 is disordered. The span at valine 590–arginine 602 shows a compositional bias: basic and acidic residues. Residues histidine 637–alanine 647 are compositionally biased toward polar residues.

The protein belongs to the FAM161 family. Interacts with FAM161A. As to expression, ubiquitously expressed.

The sequence is that of Protein FAM161B (FAM161B) from Homo sapiens (Human).